Here is a 550-residue protein sequence, read N- to C-terminus: Medium-chain acyl-CoA ligase Mig (550 aa).

The signal sequence occupies residues 1 to 19; sequence MSDTTTAFTVPAVAKAVAA.

Belongs to the ATP-dependent AMP-binding enzyme family.

It is found in the secreted. The protein resides in the cell wall. It catalyses the reaction a medium-chain fatty acid + ATP + CoA = a medium-chain fatty acyl-CoA + AMP + diphosphate. It carries out the reaction hexanoate + ATP + CoA = hexanoyl-CoA + AMP + diphosphate. The enzyme catalyses heptanoate + ATP + CoA = heptanoyl-CoA + AMP + diphosphate. The catalysed reaction is octanoate + ATP + CoA = octanoyl-CoA + AMP + diphosphate. It catalyses the reaction decanoate + ATP + CoA = decanoyl-CoA + AMP + diphosphate. It carries out the reaction dodecanoate + ATP + CoA = dodecanoyl-CoA + AMP + diphosphate. The enzyme catalyses tetradecanoate + ATP + CoA = tetradecanoyl-CoA + AMP + diphosphate. The catalysed reaction is (9Z)-octadecenoate + ATP + CoA = (9Z)-octadecenoyl-CoA + AMP + diphosphate. It catalyses the reaction (9Z,12Z,15Z)-octadecatrienoate + ATP + CoA = (9Z,12Z,15Z)-octadecatrienoyl-CoA + AMP + diphosphate. It carries out the reaction (5Z,8Z,11Z,14Z)-eicosatetraenoate + ATP + CoA = (5Z,8Z,11Z,14Z)-eicosatetraenoyl-CoA + AMP + diphosphate. Its pathway is lipid metabolism; fatty acid metabolism. Its activity is regulated as follows. Inhibited by 2-hydroxydodecanoic acid, a typical inhibitor of medium-chain acyl-CoA synthetases. Functionally, catalyzes the activation of medium-chain fatty acids as acyl-coenzyme A (acyl-CoA). Shows maximal activity with saturated fatty acids of medium-chain length between C6 and C12. Has lower activity with tridecanoic acid (C13), tetradecanoic acid (C14) and with unsaturated fatty acids like oleic acid (C18:1), linolenic acid (C18:3) and arachidonic acid (C20:4). Shows weak activity with some aromatic carbon acids. Involved in the metabolism of fatty acid during mycobacterial survival in macrophages. The chain is Medium-chain acyl-CoA ligase Mig from Mycobacterium avium.